Reading from the N-terminus, the 587-residue chain is Formate--tetrahydrofolate ligase (587 aa).

73–80 (TPLGEGKS) is a binding site for ATP.

Belongs to the formate--tetrahydrofolate ligase family.

The enzyme catalyses (6S)-5,6,7,8-tetrahydrofolate + formate + ATP = (6R)-10-formyltetrahydrofolate + ADP + phosphate. Its pathway is one-carbon metabolism; tetrahydrofolate interconversion. The sequence is that of Formate--tetrahydrofolate ligase from Desulfosudis oleivorans (strain DSM 6200 / JCM 39069 / Hxd3) (Desulfococcus oleovorans).